A 95-amino-acid polypeptide reads, in one-letter code: NELL2-interacting cell ontogeny regulator 1 (95 aa).

The signal sequence occupies residues 1–34 (MAPPPACRSPMSPPPPPLLLLLLSLALLGARARA).

This sequence belongs to the NICOL family. In terms of assembly, interacts with NELL2; triggers epididymal differentiation. Interacts with cell surface receptor TFRC; the interaction mediates uptake of NICOL1 into fibroblasts. As to expression, detected in the brain (at protein level). Also expressed at low levels in the kidney, primarily in tubular epithelial cells.

The protein resides in the secreted. It is found in the cytoplasm. Its subcellular location is the perinuclear region. Its function is as follows. mRNA-binding protein which interacts with a range of target mRNAs including SERPINE1, ACTA2, CCN2 and COL4A1 and may promote extracellular matrix production. Binds to the 3'-UTR of SERPINE1 mRNA and stabilizes the mRNA, possibly by competing for binding with SERBP1 and preventing SERBP1-mediated mRNA degradation. Also binds to the 3'-UTR of ACTA2. Testis-derived lumicrine factor that triggers epididymal differentiation and sperm maturation. The sequence is that of NELL2-interacting cell ontogeny regulator 1 from Homo sapiens (Human).